The chain runs to 218 residues: Holliday junction branch migration complex subunit RuvA (218 aa).

The segment at 1-64 (MIGKITGRLE…EDVMQLFGFT (64 aa)) is domain I. The interval 65 to 143 (TLTEKEWHRL…SVMGMSDTQA (79 aa)) is domain II. Residues 144–164 (TVAAQSSDAVIETRAAPSPVV) form a flexible linker region. The tract at residues 165–218 (QNPSAQAEALSALSNLGYAPGDAAAAVAQAAGELPDAETPDLIRAALKRLAPKG) is domain III.

It belongs to the RuvA family. In terms of assembly, homotetramer. Forms an RuvA(8)-RuvB(12)-Holliday junction (HJ) complex. HJ DNA is sandwiched between 2 RuvA tetramers; dsDNA enters through RuvA and exits via RuvB. An RuvB hexamer assembles on each DNA strand where it exits the tetramer. Each RuvB hexamer is contacted by two RuvA subunits (via domain III) on 2 adjacent RuvB subunits; this complex drives branch migration. In the full resolvosome a probable DNA-RuvA(4)-RuvB(12)-RuvC(2) complex forms which resolves the HJ.

Its subcellular location is the cytoplasm. The RuvA-RuvB-RuvC complex processes Holliday junction (HJ) DNA during genetic recombination and DNA repair, while the RuvA-RuvB complex plays an important role in the rescue of blocked DNA replication forks via replication fork reversal (RFR). RuvA specifically binds to HJ cruciform DNA, conferring on it an open structure. The RuvB hexamer acts as an ATP-dependent pump, pulling dsDNA into and through the RuvAB complex. HJ branch migration allows RuvC to scan DNA until it finds its consensus sequence, where it cleaves and resolves the cruciform DNA. The polypeptide is Holliday junction branch migration complex subunit RuvA (Roseobacter denitrificans (strain ATCC 33942 / OCh 114) (Erythrobacter sp. (strain OCh 114))).